The following is a 46-amino-acid chain: Esculentin-1a/b (46 aa).

A disulfide bridge links cysteine 40 with cysteine 46.

It belongs to the frog skin active peptide (FSAP) family. Esculentin subfamily. In terms of tissue distribution, expressed by the skin glands.

Its subcellular location is the secreted. Antimicrobial peptide. Stimulates insulin secretion by BRIN-BD11 cells in vitro. Shows hemolytic activity. The sequence is that of Esculentin-1a/b from Pelophylax ridibundus (Marsh frog).